The following is a 189-amino-acid chain: ATP synthase subunit delta (189 aa).

The protein belongs to the ATPase delta chain family. F-type ATPases have 2 components, F(1) - the catalytic core - and F(0) - the membrane proton channel. F(1) has five subunits: alpha(3), beta(3), gamma(1), delta(1), epsilon(1). F(0) has three main subunits: a(1), b(2) and c(10-14). The alpha and beta chains form an alternating ring which encloses part of the gamma chain. F(1) is attached to F(0) by a central stalk formed by the gamma and epsilon chains, while a peripheral stalk is formed by the delta and b chains.

The protein resides in the cell inner membrane. Its function is as follows. F(1)F(0) ATP synthase produces ATP from ADP in the presence of a proton or sodium gradient. F-type ATPases consist of two structural domains, F(1) containing the extramembraneous catalytic core and F(0) containing the membrane proton channel, linked together by a central stalk and a peripheral stalk. During catalysis, ATP synthesis in the catalytic domain of F(1) is coupled via a rotary mechanism of the central stalk subunits to proton translocation. This protein is part of the stalk that links CF(0) to CF(1). It either transmits conformational changes from CF(0) to CF(1) or is implicated in proton conduction. This chain is ATP synthase subunit delta, found in Methylorubrum extorquens (strain CM4 / NCIMB 13688) (Methylobacterium extorquens).